The chain runs to 237 residues: uncharacterized protein (237 aa).

Residues 119-237 form the N-acetyltransferase domain; it reads VTVRRLTPTD…PAGLDGGLPA (119 aa).

This is an uncharacterized protein from Streptomyces virginiae (Streptomyces cinnamonensis).